The following is a 446-amino-acid chain: Phosphoglucosamine mutase (446 aa).

Ser-103 functions as the Phosphoserine intermediate in the catalytic mechanism. Ser-103, Asp-242, Asp-244, and Asp-246 together coordinate Mg(2+). A Phosphoserine modification is found at Ser-103.

Belongs to the phosphohexose mutase family. Requires Mg(2+) as cofactor. Activated by phosphorylation.

It carries out the reaction alpha-D-glucosamine 1-phosphate = D-glucosamine 6-phosphate. Its function is as follows. Catalyzes the conversion of glucosamine-6-phosphate to glucosamine-1-phosphate. This is Phosphoglucosamine mutase from Vibrio vulnificus (strain YJ016).